The chain runs to 885 residues: Cadherin-1 (885 aa).

An N-terminal signal peptide occupies residues 1 to 26; the sequence is MGPRYGGAPALLLPLLLLLQVSSGLC. A propeptide spanning residues 27-156 is cleaved from the precursor; sequence QEPEPCRPGF…SQHGLRRQKR (130 aa). Positions 121 to 131 are enriched in basic residues; it reads KAATHHHHHHH. Positions 121–141 are disordered; it reads KAATHHHHHHHDAPSKTQTEV. The Extracellular segment spans residues 157 to 712; the sequence is DWVIPPISCP…YAEAGLQVPA (556 aa). Cadherin domains follow at residues 158–264, 265–377, 378–488, 489–597, and 607–688; these read WVIP…KPEF, TQAV…PPIF, NPTT…APIF, IPCP…GPIP, and KNPQ…VFVC. Asp259 provides a ligand contact to Ca(2+). Ser282 is a glycosylation site (O-linked (Man...) serine). Thr287 carries O-linked (Man...) threonine glycosylation. A Ca(2+)-binding site is contributed by Asp290. Thr360, Thr472, Thr474, and Thr511 each carry an O-linked (Man...) threonine glycan. Asn560 carries N-linked (GlcNAc...) asparagine glycosylation. Residues Thr578, Thr580, and Thr582 are each glycosylated (O-linked (Man...) threonine). A glycan (N-linked (GlcNAc...) asparagine) is linked at Asn639. The chain crosses the membrane as a helical span at residues 713–733; sequence ILGILGGILALLILILLLLLF. Residues 734–885 are Cytoplasmic-facing; sequence VRRRRVVKEP…ADMYGGGEDD (152 aa). The tract at residues 750-770 is disordered; that stretch reads DTRDNVYYYDEEGGGEEDQDF. Phosphotyrosine; by SRC is present on residues Tyr756, Tyr757, and Tyr758. A compositionally biased stretch (acidic residues) spans 758 to 770; that stretch reads YDEEGGGEEDQDF. A required for binding CTNND1 and PSEN1 region spans residues 761–772; it reads EGGGEEDQDFDL. 5 positions are modified to phosphoserine: Ser773, Ser796, Ser841, Ser843, and Ser849. Positions 792 to 811 are disordered; the sequence is PTLLSVPQYRPRPANPDEIG. The tract at residues 814–885 is required for binding alpha, beta and gamma catenins; it reads IDENLKAADT…ADMYGGGEDD (72 aa).

In terms of assembly, homodimer; disulfide-linked. Component of an E-cadherin/ catenin adhesion complex composed of at least E-cadherin/CDH1, beta-catenin/CTNNB1 or gamma-catenin/JUP, and potentially alpha-catenin/CTNNA1; the complex is located to adherens junctions. Found in a complex composed of CDH1, RAP1A and PKP3; PKP3 acts as a scaffold protein within the complex, the complex is required for CDH1 localization to mature desmosome cell junctions. Interacts with the TRPV4 and CTNNB1 complex. Interacts with CTNND1. The stable association of CTNNA1 is controversial as CTNNA1 was shown not to bind to F-actin when assembled in the complex. Alternatively, the CTNNA1-containing complex may be linked to F-actin by other proteins such as LIMA1. Interaction with PSEN1, cleaves CDH1 resulting in the disassociation of cadherin-based adherens junctions (CAJs). Interacts with AJAP1 and DLGAP5. Interacts with TBC1D2. Interacts with LIMA1. Interacts with CAV1. Interacts with PIP5K1C. Interacts with RAB8B. Interacts with DDR1; this stabilizes CDH1 at the cell surface and inhibits its internalization. Interacts with RAPGEF2. Interacts with KLRG1. Forms a ternary complex composed of ADAM10, CADH1 and EPHA4; within the complex, CADH1 is cleaved by ADAM10 which disrupts adherens junctions. Interacts with SPEF1. Interacts with CTNNB1 and PKP2. Interacts with AMOTL2; the interaction may facilitate binding of radial actin fibers to cell junction complexes. Interacts with DSG3; the interaction is required for CDH1 localization to developing adherens junctions. In terms of processing, during apoptosis or with calcium influx, cleaved by a membrane-bound metalloproteinase (ADAM10), PS1/gamma-secretase and caspase-3. Processing by the metalloproteinase, induced by calcium influx, causes disruption of cell-cell adhesion and the subsequent release of beta-catenin into the cytoplasm. The residual membrane-tethered cleavage product is rapidly degraded via an intracellular proteolytic pathway. Cleavage by caspase-3 releases the cytoplasmic tail resulting in disintegration of the actin microfilament system. The gamma-secretase-mediated cleavage promotes disassembly of adherens junctions. During development of the cochlear organ of Corti, cleavage by ADAM10 at adherens junctions promotes pillar cell separation. N-glycosylation at Asn-639 is essential for expression, folding and trafficking. Addition of bisecting N-acetylglucosamine by MGAT3 modulates its cell membrane location. Post-translationally, ubiquitinated by a SCF complex containing SKP2, which requires prior phosphorylation by CK1/CSNK1A1. Ubiquitinated by CBLL1/HAKAI, requires prior phosphorylation at Tyr-757. In terms of processing, O-glycosylated. O-manosylated by TMTC1, TMTC2, TMTC3 or TMTC4. Thr-287 and Thr-511 are O-mannosylated by TMTC2 or TMTC4 but not TMTC1 or TMTC3.

It is found in the cell junction. The protein localises to the adherens junction. It localises to the cell membrane. Its subcellular location is the endosome. The protein resides in the golgi apparatus. It is found in the trans-Golgi network. The protein localises to the cytoplasm. It localises to the desmosome. In terms of biological role, cadherins are calcium-dependent cell adhesion proteins. They preferentially interact with themselves in a homophilic manner in connecting cells; cadherins may thus contribute to the sorting of heterogeneous cell types. CDH1 is involved in mechanisms regulating cell-cell adhesions, mobility and proliferation of epithelial cells. Promotes organization of radial actin fiber structure and cellular response to contractile forces, via its interaction with AMOTL2 which facilitates anchoring of radial actin fibers to CDH1 junction complexes at the cell membrane. Plays a role in the early stages of desmosome cell-cell junction formation via facilitating the recruitment of DSG2 and DSP to desmosome plaques. Has a potent invasive suppressor role. It is a ligand for integrin alpha-E/beta-7. Functionally, E-Cad/CTF2 promotes non-amyloidogenic degradation of Abeta precursors. Has a strong inhibitory effect on APP C99 and C83 production. The chain is Cadherin-1 (CDH1) from Canis lupus familiaris (Dog).